The chain runs to 833 residues: MTFYNHKAIEPKWQAFWADNHTFKTGTDASKPKFYALDMFPYPSGAGLHVGHPEGYTATDILSRFKRAQGYNVLHPMGWDAFGLPAEQYAMDTGNDPAEFTAENIANFKRQINALGFSYDWDREINTTDPSYYKWTQWIFTKLYEKGLAYEAEVPVNWVEELGTAIANEEVLPDGTSERGGYPVVRKPMRQWMLKITAYAERLLADLEEVDWPESIKDMQRNWIGKSTGANVTFKVKDTDKDFTVFTTRPDTLFGATYAVLAPEHALVDSITTAEQAAAVAEYKRQASLKSDLARTDLAKEKTGVWTGAYAINPVNGKEMPIWIADYVLASYGTGAIMAVPAHDERDWAFAKQFNLEIIPVLEGGNVDEAAYTEDGIHINSGFLDGLDKACAITKMVAWLEETGVGHEKVSYRLRDWLFSRQRYWGEPIPIIHWEDGTSTAVPEQDLPLVLPVTKDIRPSGTGESPLANLTDWLEVTREDGVKGRRETNTMPQWAGSSWYYLRYIDPHNDEQLADKDLLKQWLPVDIYIGGAEHAVLHLLYARFWHKVLYDLGVVPTKEPFQKLFNQGMILGTSYRDHRGALVATDKVDKRDGSFFHMETGEELEQAPAKMSKSLKNVVNPDDVVEQYGADTLRVYEMFMGPLDASIAWSEEGLEGARKFLDRVYRLITTKEIVAENSGALDKAYHETVKAVTEQIEGMKFNTAIAQLMIFVNAANKEDELYVAYAKGFVQLLAPFAPHLGEELWQILTASGQSISYVAWPTHDDSKLVENDVEIVVQIKGKVKAKLVVAKDLSREELEKVALAHDKIQAEIAGKEVAKVIVVPNKLVNIVVK.

The 'HIGH' region signature appears at 41-52; sequence PYPSGAGLHVGH. The 'KMSKS' region signature appears at 610-614; that stretch reads KMSKS. Position 613 (Lys-613) interacts with ATP.

The protein belongs to the class-I aminoacyl-tRNA synthetase family.

Its subcellular location is the cytoplasm. It carries out the reaction tRNA(Leu) + L-leucine + ATP = L-leucyl-tRNA(Leu) + AMP + diphosphate. This chain is Leucine--tRNA ligase, found in Streptococcus equi subsp. zooepidemicus (strain MGCS10565).